Here is an 860-residue protein sequence, read N- to C-terminus: Probable inorganic carbon transporter subunit DabA (860 aa).

The segment at 1 to 32 is disordered; the sequence is MTTTSLGADAAHTHAMVPSAIPPEGSDAAGPD. Zn(2+)-binding residues include Cys369, Asp371, His551, and Cys566.

This sequence belongs to the inorganic carbon transporter (TC 9.A.2) DabA family. Forms a complex with DabB. Requires Zn(2+) as cofactor.

It is found in the cell inner membrane. In terms of biological role, part of an energy-coupled inorganic carbon pump. This Ralstonia pickettii (strain 12D) protein is Probable inorganic carbon transporter subunit DabA.